Reading from the N-terminus, the 282-residue chain is NADPH-dependent 7-cyano-7-deazaguanine reductase (282 aa).

Residue 88-90 (IES) participates in substrate binding. An NADPH-binding site is contributed by 90–91 (SK). Cys190 functions as the Thioimide intermediate in the catalytic mechanism. Residue Asp197 is the Proton donor of the active site. 229-230 (HE) provides a ligand contact to substrate. 258-259 (RG) provides a ligand contact to NADPH.

This sequence belongs to the GTP cyclohydrolase I family. QueF type 2 subfamily. In terms of assembly, homodimer.

Its subcellular location is the cytoplasm. It carries out the reaction 7-aminomethyl-7-carbaguanine + 2 NADP(+) = 7-cyano-7-deazaguanine + 2 NADPH + 3 H(+). Its pathway is tRNA modification; tRNA-queuosine biosynthesis. Functionally, catalyzes the NADPH-dependent reduction of 7-cyano-7-deazaguanine (preQ0) to 7-aminomethyl-7-deazaguanine (preQ1). This Salmonella paratyphi B (strain ATCC BAA-1250 / SPB7) protein is NADPH-dependent 7-cyano-7-deazaguanine reductase.